The following is a 194-amino-acid chain: Peptidyl-tRNA hydrolase (194 aa).

Residue His-22 is the Proton acceptor of the active site. Residues Tyr-67, Asn-69, and Asn-115 each coordinate tRNA.

The protein belongs to the PTH family. In terms of assembly, monomer.

Its subcellular location is the cytoplasm. The enzyme catalyses an N-acyl-L-alpha-aminoacyl-tRNA + H2O = an N-acyl-L-amino acid + a tRNA + H(+). In terms of biological role, hydrolyzes ribosome-free peptidyl-tRNAs (with 1 or more amino acids incorporated), which drop off the ribosome during protein synthesis, or as a result of ribosome stalling. Functionally, catalyzes the release of premature peptidyl moieties from peptidyl-tRNA molecules trapped in stalled 50S ribosomal subunits, and thus maintains levels of free tRNAs and 50S ribosomes. The polypeptide is Peptidyl-tRNA hydrolase (Granulibacter bethesdensis (strain ATCC BAA-1260 / CGDNIH1)).